The primary structure comprises 136 residues: MRHGKVHRKLNRTAEHRKAMFANMCASLIKHEQIITTLPKAKELRPIVEKLITLGKKNTLASRRQAISEMRDLDQVKKLFAVMAPRYADRHGGYTRIIKAGFRYGDNAPMAVIEFVDRDIEAKGKDSGPTQESEAA.

It belongs to the bacterial ribosomal protein bL17 family. Part of the 50S ribosomal subunit. Contacts protein L32.

The chain is Large ribosomal subunit protein bL17 from Rhodopseudomonas palustris (strain BisA53).